The chain runs to 265 residues: Sulfur carrier protein FdhD (265 aa).

Catalysis depends on cysteine 107, which acts as the Cysteine persulfide intermediate.

The protein belongs to the FdhD family.

The protein localises to the cytoplasm. Functionally, required for formate dehydrogenase (FDH) activity. Acts as a sulfur carrier protein that transfers sulfur from IscS to the molybdenum cofactor prior to its insertion into FDH. This Staphylococcus aureus (strain JH9) protein is Sulfur carrier protein FdhD.